Consider the following 222-residue polypeptide: Cytidylate kinase 2 (222 aa).

Residue 7 to 15 coordinates ATP; sequence GPSGAGKGT.

This sequence belongs to the cytidylate kinase family. Type 1 subfamily.

The protein localises to the cytoplasm. It carries out the reaction CMP + ATP = CDP + ADP. It catalyses the reaction dCMP + ATP = dCDP + ADP. The protein is Cytidylate kinase 2 of Haemophilus influenzae (strain ATCC 51907 / DSM 11121 / KW20 / Rd).